The sequence spans 72 residues: Translation initiation factor IF-1 (72 aa).

One can recognise an S1-like domain in the interval 1–72 (MAKDNVIEIE…SKGRITYRFK (72 aa)).

The protein belongs to the IF-1 family. In terms of assembly, component of the 30S ribosomal translation pre-initiation complex which assembles on the 30S ribosome in the order IF-2 and IF-3, IF-1 and N-formylmethionyl-tRNA(fMet); mRNA recruitment can occur at any time during PIC assembly.

The protein resides in the cytoplasm. Functionally, one of the essential components for the initiation of protein synthesis. Stabilizes the binding of IF-2 and IF-3 on the 30S subunit to which N-formylmethionyl-tRNA(fMet) subsequently binds. Helps modulate mRNA selection, yielding the 30S pre-initiation complex (PIC). Upon addition of the 50S ribosomal subunit IF-1, IF-2 and IF-3 are released leaving the mature 70S translation initiation complex. The sequence is that of Translation initiation factor IF-1 from Pediococcus pentosaceus (strain ATCC 25745 / CCUG 21536 / LMG 10740 / 183-1w).